The primary structure comprises 276 residues: MIIDGVKISETKMERLKNEIEKIKNTGINPKMKIILIGNDYGSVVYSKAKMRRGSKLGIDVDLDRYDSISREDLIKLLKRYSQSDDIHGIMIETPVPGINYYDVVNEIPFYKDVDGMTSYNLGNLYLKNEFIAPATARAVVDILDYINIKSGNVAIINRSPVVGRPLSMMLLNRDFTVTVCHSRTVNINEITRSSDIVVVAVGKPNFLDRSYVSDKNIIIDVGINYLNGKTCGDADYENIKDYVNAITPVPGGVGPVTATDIFENFINGLKYQIKG.

NADP(+) is bound by residues 158 to 160 (NRS), S183, and I224.

The protein belongs to the tetrahydrofolate dehydrogenase/cyclohydrolase family. Homodimer.

It catalyses the reaction (6R)-5,10-methylene-5,6,7,8-tetrahydrofolate + NADP(+) = (6R)-5,10-methenyltetrahydrofolate + NADPH. The enzyme catalyses (6R)-5,10-methenyltetrahydrofolate + H2O = (6R)-10-formyltetrahydrofolate + H(+). It functions in the pathway one-carbon metabolism; tetrahydrofolate interconversion. Functionally, catalyzes the oxidation of 5,10-methylenetetrahydrofolate to 5,10-methenyltetrahydrofolate and then the hydrolysis of 5,10-methenyltetrahydrofolate to 10-formyltetrahydrofolate. This Picrophilus torridus (strain ATCC 700027 / DSM 9790 / JCM 10055 / NBRC 100828 / KAW 2/3) protein is Bifunctional protein FolD.